The chain runs to 80 residues: LSM complex subunit lsm5 (80 aa).

The Sm domain occupies 6–79; sequence LPLELIDKCI…MCMLIPGGKP (74 aa).

It belongs to the snRNP Sm proteins family. In terms of assembly, component of the heptameric LSM1-LSM7 complex that forms a seven-membered ring structure with a donut shape. The LSm subunits are arranged in the order lsm1, lsm2, lsm3, lsm6, lsm5, lsm7 and lsm4. Component of the heptameric LSM2-LSM8 complex that forms a seven-membered ring structure with a donut shape. The LSm subunits are arranged in the order lsm8, lsm2, lsm3, lsm6, lsm5, lsm7 and lsm4.

The protein localises to the nucleus. Its function is as follows. Component of LSm protein complexes, which are involved in RNA processing and may function in a chaperone-like manner. Component of the cytoplasmic LSM1-LSM7 complex which is involved in mRNA degradation by activating the decapping step. The LSM1-LSM7 complex loads onto the 3'-end of single stranded RNA. Component of the nuclear LSM2-LSM8 complex, which is involved in spliceosome assembly. The LSM2-LSM8 complex plays a role in the biogenesis of the spliceosomal U4/U6-U5 tri-snRNP complex by accelerating prp24-mediated annealing of U4/U6 di-snRNA. The LSM2-LSM8 complex binds U6 snRNA terminating with a cyclic 2',3' phosphate group; RNA with an unmodified 3' hydroxyl or non-cyclic 3' phosphate is bound less tightly. The chain is LSM complex subunit lsm5 (lsm5) from Schizosaccharomyces pombe (strain 972 / ATCC 24843) (Fission yeast).